Here is a 397-residue protein sequence, read N- to C-terminus: 2,3-bisphosphoglycerate-independent phosphoglycerate mutase (397 aa).

This sequence belongs to the BPG-independent phosphoglycerate mutase family. A-PGAM subfamily.

It catalyses the reaction (2R)-2-phosphoglycerate = (2R)-3-phosphoglycerate. It functions in the pathway carbohydrate degradation; glycolysis; pyruvate from D-glyceraldehyde 3-phosphate: step 3/5. Catalyzes the interconversion of 2-phosphoglycerate and 3-phosphoglycerate. This chain is 2,3-bisphosphoglycerate-independent phosphoglycerate mutase (apgM), found in Methanosarcina mazei (strain ATCC BAA-159 / DSM 3647 / Goe1 / Go1 / JCM 11833 / OCM 88) (Methanosarcina frisia).